Reading from the N-terminus, the 411-residue chain is Dihydrolipoyllysine-residue succinyltransferase component of 2-oxoglutarate dehydrogenase complex (411 aa).

One can recognise a Lipoyl-binding domain in the interval 2–77; it reads TTEIRVPTLG…EVNALLGAVE (76 aa). Lys43 bears the N6-lipoyllysine mark. A compositionally biased stretch (low complexity) spans 82–100; the sequence is SVAKSPSSSETSVSAAPSE. Residues 82 to 115 are disordered; the sequence is SVAKSPSSSETSVSAAPSELEQSSSSNTMPPAPS. The segment covering 101–110 has biased composition (polar residues); sequence LEQSSSSNTM. The Peripheral subunit-binding (PSBD) domain occupies 111–148; that stretch reads PPAPSAAKLMAENNIAKSDILGSGKRGQILKEDVLNVL. Residues His382 and Asp386 contribute to the active site.

It belongs to the 2-oxoacid dehydrogenase family. In terms of assembly, forms a 24-polypeptide structural core with octahedral symmetry. Part of the 2-oxoglutarate dehydrogenase (OGDH) complex composed of E1 (2-oxoglutarate dehydrogenase), E2 (dihydrolipoamide succinyltransferase) and E3 (dihydrolipoamide dehydrogenase); the complex contains multiple copies of the three enzymatic components (E1, E2 and E3). (R)-lipoate is required as a cofactor.

The catalysed reaction is N(6)-[(R)-dihydrolipoyl]-L-lysyl-[protein] + succinyl-CoA = N(6)-[(R)-S(8)-succinyldihydrolipoyl]-L-lysyl-[protein] + CoA. The protein operates within amino-acid degradation; L-lysine degradation via saccharopine pathway; glutaryl-CoA from L-lysine: step 6/6. Its function is as follows. E2 component of the 2-oxoglutarate dehydrogenase (OGDH) complex which catalyzes the second step in the conversion of 2-oxoglutarate to succinyl-CoA and CO(2). The protein is Dihydrolipoyllysine-residue succinyltransferase component of 2-oxoglutarate dehydrogenase complex (sucB) of Bartonella vinsonii subsp. berkhoffii.